Consider the following 88-residue polypeptide: Small ribosomal subunit protein bS20 (88 aa).

The interval 1–27 (MANSKSAKKRALQSEKRRQHNASRRSM) is disordered.

This sequence belongs to the bacterial ribosomal protein bS20 family.

Functionally, binds directly to 16S ribosomal RNA. The polypeptide is Small ribosomal subunit protein bS20 (Shewanella loihica (strain ATCC BAA-1088 / PV-4)).